We begin with the raw amino-acid sequence, 389 residues long: Succinate--CoA ligase [ADP-forming] subunit beta (389 aa).

The 228-residue stretch at 9 to 236 (KELFAKHEVP…KDATDPLELK (228 aa)) folds into the ATP-grasp domain. ATP-binding positions include Lys45, 52–54 (GRG), Ser94, and Glu99. Asn191 and Asp205 together coordinate Mg(2+). Substrate contacts are provided by residues Asn256 and 318 to 320 (GIT).

The protein belongs to the succinate/malate CoA ligase beta subunit family. As to quaternary structure, heterotetramer of two alpha and two beta subunits. Mg(2+) serves as cofactor.

It carries out the reaction succinate + ATP + CoA = succinyl-CoA + ADP + phosphate. The catalysed reaction is GTP + succinate + CoA = succinyl-CoA + GDP + phosphate. It functions in the pathway carbohydrate metabolism; tricarboxylic acid cycle; succinate from succinyl-CoA (ligase route): step 1/1. Succinyl-CoA synthetase functions in the citric acid cycle (TCA), coupling the hydrolysis of succinyl-CoA to the synthesis of either ATP or GTP and thus represents the only step of substrate-level phosphorylation in the TCA. The beta subunit provides nucleotide specificity of the enzyme and binds the substrate succinate, while the binding sites for coenzyme A and phosphate are found in the alpha subunit. The sequence is that of Succinate--CoA ligase [ADP-forming] subunit beta from Rhodococcus jostii (strain RHA1).